The primary structure comprises 279 residues: Diaminopimelate epimerase (279 aa).

Positions 11 and 63 each coordinate substrate. Cys72 acts as the Proton donor in catalysis. Residues 73–74 (GN), Asn161, Asn194, and 212–213 (ER) contribute to the substrate site. Cys221 acts as the Proton acceptor in catalysis. Substrate is bound at residue 222 to 223 (GT).

The protein belongs to the diaminopimelate epimerase family. Homodimer.

The protein localises to the cytoplasm. It catalyses the reaction (2S,6S)-2,6-diaminopimelate = meso-2,6-diaminopimelate. It participates in amino-acid biosynthesis; L-lysine biosynthesis via DAP pathway; DL-2,6-diaminopimelate from LL-2,6-diaminopimelate: step 1/1. Its function is as follows. Catalyzes the stereoinversion of LL-2,6-diaminopimelate (L,L-DAP) to meso-diaminopimelate (meso-DAP), a precursor of L-lysine and an essential component of the bacterial peptidoglycan. The sequence is that of Diaminopimelate epimerase from Moorella thermoacetica (strain ATCC 39073 / JCM 9320).